The chain runs to 793 residues: MELRSWLLWVVAAAGAVVLLAADAQGQKIFTNTWAVHIPGGPAVADRVAQKHGFHNLGQIFGDYYHFWHRAVTKRSLSPHRPRHSRLQREPQVKWLEQQVAKRRAKRDVYQEPTDPKFPQQWYLSGVTQRDLNVKEAWAQGFTGHGIVVSILDDGIEKNHPDLAGNYDPGASFDVNDQDPDPQPRYTQMNDNRHGTRCAGEVAAVANNGVCGVGVAYNARIGGVRMLDGEVTDAVEARSLGLNPNHIHIYSASWGPEDDGKTVDGPARLAEEAFFRGVSQGRGGLGSIFVWASGNGGREHDSCNCDGYTNSIYTLSISSATQFGNVPWYSEACSSTLATTYSSGNQNEKQIVTTDLRQKCTESHTGTSASAPLAAGIIALTLEANKNLTWRDMQHLVVQTSKPAHLNADDWATNGVGRKVSHSYGYGLLDAGAMVALAQNWTTVAPQRKCIVEILVEPKDIGKRLEVRKAVTACLGEPNHITRLEHVQARLTLSYNRRGDLAIHLISPMGTRSTLLAARPHDYSADGFNDWAFMTTHSWDEDPAGEWVLEIENTSEANNYGTLTKFTLVLYGTAPEGLSTPPESSGCKTLTSSQACVVCEEGYSLHQKSCVQHCPPGFIPQVLDTHYSTENDVEIIRASVCTPCHASCATCQGPAPTDCLSCPSHASLDPVEQTCSRQSQSSRESRPQQQPPALRPEVEMEPRLQAGLASHLPEVLAGLSCLIIVLIFGIVFLFLHRCSGFSFRGVKVYTMDRGLISYKGLPPEAWQEECPSDSEEDEGRGERTAFIKDQSAL.

A signal peptide spans 1–24; that stretch reads MELRSWLLWVVAAAGAVVLLAADA. Positions 25-107 are cleaved as a propeptide — inhibition peptide; that stretch reads QGQKIFTNTW…QQVAKRRAKR (83 aa). Over 108–714 the chain is Lumenal; it reads DVYQEPTDPK…QAGLASHLPE (607 aa). Asp115 is a Ca(2+) binding site. A Peptidase S8 domain is found at 121–435; it reads QWYLSGVTQR…YGLLDAGAMV (315 aa). Asp153 functions as the Charge relay system in the catalytic mechanism. Residue Asp154 participates in substrate binding. The interval 160 to 182 is disordered; the sequence is HPDLAGNYDPGASFDVNDQDPDP. Ca(2+) is bound by residues Asp162, Asp174, Asp179, and Asp181. 191–192 is a binding site for substrate; the sequence is DN. His194 functions as the Charge relay system in the catalytic mechanism. Val205, Asn208, Val210, and Gly212 together coordinate Ca(2+). 2 cysteine pairs are disulfide-bonded: Cys211–Cys360 and Cys303–Cys333. Substrate contacts are provided by residues Glu236, 253-258, Asp264, and 292-295; these read SWGPED and ASGN. Asp258 is a binding site for Ca(2+). Asp301 contacts Ca(2+). Residues Asp306 and Tyr308 each coordinate substrate. A Ca(2+)-binding site is contributed by Glu331. The active-site Charge relay system is Ser368. Ser368 contributes to the substrate binding site. N-linked (GlcNAc...) asparagine glycosylation is found at Asn387 and Asn440. One can recognise a P/Homo B domain in the interval 444–576; the sequence is VAPQRKCIVE…TLVLYGTAPE (133 aa). Cys450 and Cys474 are disulfide-bonded. The Cell attachment site motif lies at 498–500; it reads RGD. 2 FU repeats span residues 577–620 and 638–681; these read GLST…GFIP and ASVC…QSQS. The tract at residues 673–697 is disordered; sequence QTCSRQSQSSRESRPQQQPPALRPE. Over residues 676 to 688 the composition is skewed to low complexity; sequence SRQSQSSRESRPQ. Residues 715–735 form a helical membrane-spanning segment; sequence VLAGLSCLIIVLIFGIVFLFL. Residues 736-793 lie on the Cytoplasmic side of the membrane; that stretch reads HRCSGFSFRGVKVYTMDRGLISYKGLPPEAWQEECPSDSEEDEGRGERTAFIKDQSAL. The interval 758–761 is cell surface signal; it reads YKGL. Residues 766-779 are compositionally biased toward acidic residues; the sequence is WQEECPSDSEEDEG. Positions 766–793 are disordered; sequence WQEECPSDSEEDEGRGERTAFIKDQSAL. Phosphoserine occurs at positions 772 and 774. Residues 772–778 carry the Trans Golgi network signal motif; sequence SDSEEDE.

It belongs to the peptidase S8 family. Furin subfamily. In terms of assembly, interacts with FLNA. Binds to PACS1 which mediates TGN localization and connection to clathrin adapters. Ca(2+) serves as cofactor. Post-translationally, the inhibition peptide, which plays the role of an intramolecular chaperone, is autocatalytically removed in the endoplasmic reticulum (ER) and remains non-covalently bound to furin as a potent autoinhibitor. Following transport to the trans Golgi, a second cleavage within the inhibition propeptide results in propeptide dissociation and furin activation. Phosphorylation is required for TGN localization of the endoprotease. In vivo, exists as di-, mono- and non-phosphorylated forms. In terms of tissue distribution, seems to be expressed ubiquitously. Expressed in islets of Langerhans.

The protein localises to the golgi apparatus. It localises to the trans-Golgi network membrane. Its subcellular location is the cell membrane. The protein resides in the secreted. It is found in the endosome membrane. The enzyme catalyses Release of mature proteins from their proproteins by cleavage of -Arg-Xaa-Yaa-Arg-|-Zaa- bonds, where Xaa can be any amino acid and Yaa is Arg or Lys. Releases albumin, complement component C3 and von Willebrand factor from their respective precursors.. Inhibited by the not secondly cleaved propeptide. Inhibited by m-guanidinomethyl-phenylacetyl-Arg-Val-Arg-(amidomethyl)-benzamidine (m-guanidinomethyl-Phac-RVR-Amb) and 4-guanidinomethyl-phenylacetyl-Arg-Tle-Arg-4-amidinobenzylamide (MI-1148). Inhibited by Decanoyl-Arg-Val-Lys-Arg-chloromethylketone (decanoyl-RVKR-CMK). Inhibited by heparin/heparan sulfate-binding. Ubiquitous endoprotease within constitutive secretory pathways capable of cleavage at the RX(K/R)R consensus motif. Mediates processing of TGFB1, an essential step in TGF-beta-1 activation. Converts through proteolytic cleavage the non-functional Brain natriuretic factor prohormone into its active hormone BNP(1-45). By mediating processing of accessory subunit ATP6AP1/Ac45 of the V-ATPase, regulates the acidification of dense-core secretory granules in islets of Langerhans cells. This chain is Furin (Furin), found in Mus musculus (Mouse).